Consider the following 295-residue polypeptide: Nucleotide-binding protein RBAM_031990 (295 aa).

16–23 (GMSGAGKT) lines the ATP pocket. 67 to 70 (DLRG) lines the GTP pocket.

It belongs to the RapZ-like family.

Functionally, displays ATPase and GTPase activities. This Bacillus velezensis (strain DSM 23117 / BGSC 10A6 / LMG 26770 / FZB42) (Bacillus amyloliquefaciens subsp. plantarum) protein is Nucleotide-binding protein RBAM_031990.